We begin with the raw amino-acid sequence, 682 residues long: Probable glycosyl transferase Gly (682 aa).

UDP contacts are provided by residues 21–26 (CASFSD) and 112–113 (DC). Mn(2+)-binding residues include Asp112, Asp114, and His230. 230–236 (HYLPERK) is a UDP binding site.

This sequence belongs to the glycosyltransferase 8 family. Part of the accessory SecA2/SecY2 protein translocation apparatus required to export cell wall protein GspB.

Part of the accessory SecA2/SecY2 system specifically required to export GspB, a serine-rich repeat cell wall protein encoded upstream in the same operon. This is Probable glycosyl transferase Gly (gly) from Streptococcus gordonii.